We begin with the raw amino-acid sequence, 103 residues long: ATP synthase subunit c (103 aa).

3 helical membrane passes run 3–23 (FLALLCLGMVGFAFGAEVSGL), 30–50 (SIAGAVIGLGIAALGGAIGMG), and 74–94 (MFIALALIEAQVIYTLVLALI).

Belongs to the ATPase C chain family. In terms of assembly, F-type ATPases have 2 components, F(1) - the catalytic core - and F(0) - the membrane proton channel. F(1) has five subunits: alpha(3), beta(3), gamma(1), delta(1), epsilon(1). F(0) has three main subunits: a(1), b(2) and c(10-14). The alpha and beta chains form an alternating ring which encloses part of the gamma chain. F(1) is attached to F(0) by a central stalk formed by the gamma and epsilon chains, while a peripheral stalk is formed by the delta and b chains.

The protein localises to the cell inner membrane. Its function is as follows. F(1)F(0) ATP synthase produces ATP from ADP in the presence of a proton or sodium gradient. F-type ATPases consist of two structural domains, F(1) containing the extramembraneous catalytic core and F(0) containing the membrane proton channel, linked together by a central stalk and a peripheral stalk. During catalysis, ATP synthesis in the catalytic domain of F(1) is coupled via a rotary mechanism of the central stalk subunits to proton translocation. Key component of the F(0) channel; it plays a direct role in translocation across the membrane. A homomeric c-ring of between 10-14 subunits forms the central stalk rotor element with the F(1) delta and epsilon subunits. This is ATP synthase subunit c from Helicobacter hepaticus (strain ATCC 51449 / 3B1).